The following is a 47-amino-acid chain: uncharacterized protein (47 aa).

The signal sequence occupies residues 1 to 25; sequence MAHKCASAKLLSGIMALLFNGKSLL.

This is an uncharacterized protein from Saccharomyces cerevisiae (strain ATCC 204508 / S288c) (Baker's yeast).